The chain runs to 552 residues: Arginine--tRNA ligase (552 aa).

Residues 123–133 (ANPTGPLTIGR) carry the 'HIGH' region motif.

The protein belongs to the class-I aminoacyl-tRNA synthetase family. As to quaternary structure, monomer.

Its subcellular location is the cytoplasm. It catalyses the reaction tRNA(Arg) + L-arginine + ATP = L-arginyl-tRNA(Arg) + AMP + diphosphate. The protein is Arginine--tRNA ligase of Chlorobium phaeovibrioides (strain DSM 265 / 1930) (Prosthecochloris vibrioformis (strain DSM 265)).